The chain runs to 424 residues: COUP transcription factor 1 (424 aa).

Positions 1–82 (MAMVVSSWRD…QGPPGSGQSQ (82 aa)) are disordered. A compositionally biased stretch (low complexity) spans 39–68 (EQQQQQAGSGAPHTPQTPGQPGAPATPGTA). Positions 84–159 (HIECVVCGDK…VGMRREAVQR (76 aa)) form a DNA-binding region, nuclear receptor. NR C4-type zinc fingers lie at residues 87–107 (CVVC…CEGC) and 123–147 (CRAN…LKKC). Residues 185–411 (YLSGYISLLL…TLIRDMLLSG (227 aa)) form the NR LBD domain.

It belongs to the nuclear hormone receptor family. NR2 subfamily. In terms of assembly, binds DNA as dimer; homodimer and probable heterodimer with NR2F6. Interacts with GTF2B; this interaction is direct. Interacts with COPS2.

Its subcellular location is the nucleus. In terms of biological role, coup (chicken ovalbumin upstream promoter) transcription factor binds to the ovalbumin promoter and, in conjunction with another protein (S300-II) stimulates initiation of transcription. Binds to both direct repeats and palindromes of the 5'-AGGTCA-3' motif. Represses transcriptional activity of LHCG. The chain is COUP transcription factor 1 (NR2F1) from Bos taurus (Bovine).